We begin with the raw amino-acid sequence, 494 residues long: MTAAVTANVVTLPAAEPAKAVRDTRPLRLITCGSVDDGKSTLIGRLLWDTKAVKEDQAATLQRDSTGKQNDLGLPDFALLLDGLQAEREQGITIDVAYRYFSTDNRSFIVADTPGHEQYTRNMATGASTADLAILLIDARLGILEQTRRHATIASLLGIKQFVLAVNKIDLTNYDRAGFEKIAHDFREFALSLGVKQITAIPMSALKGENVVYSGQAAMPWYNGPTLVETLELATVRSAQSVGFRLSVQRVSRPGESFRGYQGTVAGGSVKPGDSVMILPSGMVANVSKIVTFDLVRNAAVAGDAITLVLDRQVDVSRGDMIVAIDSQPQSGLAFDAQIVALQPEGIEPGKRYWLKSGSRRQRVQVQPIAQLELKTGAWAPAQALWMNAIGKVRLSFDEAAVFDPYDQNRSTGSFILIDPDSNNTIAGGMITGKRTDLGGIHKEGQRVLLSLPADLADQIMASELFASRRDETEVRRVTAAQAADIWANAASDI.

Positions T24–Q240 constitute a tr-type G domain. A G1 region spans residues G33–S40. G33 to S40 provides a ligand contact to GTP. The interval G91–D95 is G2. Residues D112–G115 are G3. GTP contacts are provided by residues D112 to H116 and N167 to D170. The segment at N167–D170 is G4. The tract at residues S204–L206 is G5.

Belongs to the TRAFAC class translation factor GTPase superfamily. Classic translation factor GTPase family. CysN/NodQ subfamily. As to quaternary structure, heterodimer composed of CysD, the smaller subunit, and CysN.

The catalysed reaction is sulfate + ATP + H(+) = adenosine 5'-phosphosulfate + diphosphate. Its pathway is sulfur metabolism; hydrogen sulfide biosynthesis; sulfite from sulfate: step 1/3. Functionally, with CysD forms the ATP sulfurylase (ATPS) that catalyzes the adenylation of sulfate producing adenosine 5'-phosphosulfate (APS) and diphosphate, the first enzymatic step in sulfur assimilation pathway. APS synthesis involves the formation of a high-energy phosphoric-sulfuric acid anhydride bond driven by GTP hydrolysis by CysN coupled to ATP hydrolysis by CysD. The chain is Sulfate adenylyltransferase subunit 1 from Rhizobium rhizogenes (strain K84 / ATCC BAA-868) (Agrobacterium radiobacter).